Here is a 378-residue protein sequence, read N- to C-terminus: uncharacterized protein (378 aa).

Helical transmembrane passes span 7–29, 33–55, 68–85, 90–108, 115–137, 152–174, 204–225, 245–267, 280–302, and 347–366; these read VTPF…RLSQ, LFFV…YQII, VSYL…EFYT, SGSL…HLLL, PLTV…FLYL, LTVG…MLIM, NYKL…FLYL, IFLF…ASHA, LILY…PRIV, and FSPL…ALFL.

The protein localises to the cell membrane. This is an uncharacterized protein from Aquifex aeolicus (strain VF5).